We begin with the raw amino-acid sequence, 601 residues long: Cdc42-interacting protein 4 (601 aa).

Residues 1 to 117 are required for podosome formation and interaction with AKAP9 and microtubules; the sequence is MDWGTELWDQ…EMKQERKMHF (117 aa). The required for translocation to the plasma membrane in response to insulin stretch occupies residues 1-117; the sequence is MDWGTELWDQ…EMKQERKMHF (117 aa). In terms of domain architecture, F-BAR spans 1–264; that stretch reads MDWGTELWDQ…AANAVDPKND (264 aa). Positions 67–259 form a coiled coil; it reads FSQQQSFVQI…EGMKVAANAV (193 aa). Disordered regions lie at residues 280–358, 390–420, and 479–543; these read GDVE…GRDP, DFSH…EVDQ, and RGDS…SPIG. The span at 289-302 shows a compositional bias: polar residues; sequence QPMNRAPSDSSLGT. The interaction with CDC42 stretch occupies residues 293-537; that stretch reads RAPSDSSLGT…TEFDEDFEEE (245 aa). The tract at residues 293 to 601 is interaction with PDE6G; the sequence is RAPSDSSLGT…PTSYLRVTLN (309 aa). Residues serine 296, serine 298, and serine 299 each carry the phosphoserine modification. A compositionally biased stretch (basic residues) spans 314–329; sequence GRSRTKRWPFGKKNKP. Serine 335 carries the phosphoserine modification. A compositionally biased stretch (low complexity) spans 336–346; it reads PLGGPVPSALP. At serine 351 the chain carries Phosphoserine. A coiled-coil region spans residues 388-481; it reads TEDFSHLPPE…ESRVLSNRGD (94 aa). In terms of domain architecture, REM-1 spans 393 to 470; that stretch reads HLPPEQQRKR…VQKYEAWLAE (78 aa). The span at 407–420 shows a compositional bias: basic and acidic residues; the sequence is LEERSRELQKEVDQ. The required for interaction with FASLG and localization to lysosomes stretch occupies residues 471–601; the sequence is AESRVLSNRG…PTSYLRVTLN (131 aa). Phosphoserine is present on serine 482. The tract at residues 487–541 is interaction with DNM2 and WASL; it reads ARPPDPPASAPPDSSSNSASQDTKESSEEPPSEESQDTPIYTEFDEDFEEEPTSP. A compositionally biased stretch (low complexity) spans 497 to 506; that stretch reads PPDSSSNSAS. A compositionally biased stretch (acidic residues) spans 529–538; that stretch reads EFDEDFEEEP. Positions 529 to 601 are interaction with DNM1 and WASL; it reads EFDEDFEEEP…PTSYLRVTLN (73 aa). The interval 538–601 is required for podosome formation; that stretch reads PTSPIGHCVA…PTSYLRVTLN (64 aa). In terms of domain architecture, SH3 spans 540–601; the sequence is SPIGHCVAIY…PTSYLRVTLN (62 aa). The interval 544 to 601 is interaction with WAS; that stretch reads HCVAIYHFEGSSEGTISMAEGEDLSLMEEDKGDGWTRVRRKEGGEGYVPTSYLRVTLN. Positions 546–601 are interaction with ARHGAP17, DAAM1, DIAPH1 and DIAPH2; it reads VAIYHFEGSSEGTISMAEGEDLSLMEEDKGDGWTRVRRKEGGEGYVPTSYLRVTLN.

This sequence belongs to the FNBP1 family. Interacts specifically with GTP-bound RHOQ. Interacts with DNM2 and PDE6G. Homodimerizes, the dimers can polymerize end-to-end to form filamentous structures. Interacts specifically with GTP-bound CDC42. Interacts with AKAP9, ARHGAP17, DAAM1, DIAPH1, DIAPH2, DNM1, FASLG/FASL, GAPVD1, LYN, microtubules, SRC, WAS/WASP and WASL/N-WASP. Interacts with the ligand binding domain of the thyroid receptor (TR) in the presence of thyroid hormone. May interact with CTNNB1 and HD/HTT. Tyrosine phosphorylated. Also phosphorylated by PKA. As to expression, expressed in brain, colon, heart, kidney, liver, lung, megakaryocyte, ovary, pancreas, peripheral blood lymphocytes, placenta, prostate, skeletal muscle, small intestine, spleen, testis, thymus and trachea.

The protein resides in the cytoplasm. It is found in the cytoskeleton. It localises to the cell cortex. The protein localises to the lysosome. Its subcellular location is the golgi apparatus. The protein resides in the cell membrane. It is found in the cell projection. It localises to the phagocytic cup. The protein localises to the perinuclear region. Its function is as follows. Required for translocation of GLUT4 to the plasma membrane in response to insulin signaling. Required to coordinate membrane tubulation with reorganization of the actin cytoskeleton during endocytosis. Binds to lipids such as phosphatidylinositol 4,5-bisphosphate and phosphatidylserine and promotes membrane invagination and the formation of tubules. Also promotes CDC42-induced actin polymerization by recruiting WASL/N-WASP which in turn activates the Arp2/3 complex. Actin polymerization may promote the fission of membrane tubules to form endocytic vesicles. Required for the formation of podosomes, actin-rich adhesion structures specific to monocyte-derived cells. May be required for the lysosomal retention of FASLG/FASL. In Homo sapiens (Human), this protein is Cdc42-interacting protein 4 (TRIP10).